The chain runs to 146 residues: Anti-sigma F factor (146 aa).

It belongs to the anti-sigma-factor family.

The catalysed reaction is L-seryl-[protein] + ATP = O-phospho-L-seryl-[protein] + ADP + H(+). It catalyses the reaction L-threonyl-[protein] + ATP = O-phospho-L-threonyl-[protein] + ADP + H(+). Its function is as follows. Binds to sigma F and blocks its ability to form an RNA polymerase holoenzyme (E-sigma F). Phosphorylates SpoIIAA on a serine residue. This phosphorylation may enable SpoIIAA to act as an anti-anti-sigma factor that counteracts SpoIIAB and thus releases sigma F from inhibition. The polypeptide is Anti-sigma F factor (Bacillus velezensis (strain DSM 23117 / BGSC 10A6 / LMG 26770 / FZB42) (Bacillus amyloliquefaciens subsp. plantarum)).